The sequence spans 105 residues: Phosphoribosyl-AMP cyclohydrolase (105 aa).

Asp-72 serves as a coordination point for Mg(2+). Cys-73 is a Zn(2+) binding site. The Mg(2+) site is built by Asp-74 and Asp-76. 2 residues coordinate Zn(2+): Cys-89 and Cys-96.

This sequence belongs to the PRA-CH family. As to quaternary structure, homodimer. Mg(2+) is required as a cofactor. It depends on Zn(2+) as a cofactor.

It localises to the cytoplasm. The enzyme catalyses 1-(5-phospho-beta-D-ribosyl)-5'-AMP + H2O = 1-(5-phospho-beta-D-ribosyl)-5-[(5-phospho-beta-D-ribosylamino)methylideneamino]imidazole-4-carboxamide. The protein operates within amino-acid biosynthesis; L-histidine biosynthesis; L-histidine from 5-phospho-alpha-D-ribose 1-diphosphate: step 3/9. Functionally, catalyzes the hydrolysis of the adenine ring of phosphoribosyl-AMP. In Listeria monocytogenes serovar 1/2a (strain ATCC BAA-679 / EGD-e), this protein is Phosphoribosyl-AMP cyclohydrolase.